The chain runs to 180 residues: Orotate phosphoribosyltransferase (180 aa).

5-phospho-alpha-D-ribose 1-diphosphate-binding positions include arginine 95, lysine 96, lysine 99, and 121-129 (EDVTTTGGS). Threonine 125 and arginine 153 together coordinate orotate.

Belongs to the purine/pyrimidine phosphoribosyltransferase family. PyrE subfamily. In terms of assembly, homodimer. Requires Mg(2+) as cofactor.

The catalysed reaction is orotidine 5'-phosphate + diphosphate = orotate + 5-phospho-alpha-D-ribose 1-diphosphate. The protein operates within pyrimidine metabolism; UMP biosynthesis via de novo pathway; UMP from orotate: step 1/2. In terms of biological role, catalyzes the transfer of a ribosyl phosphate group from 5-phosphoribose 1-diphosphate to orotate, leading to the formation of orotidine monophosphate (OMP). The polypeptide is Orotate phosphoribosyltransferase (Methanothermobacter thermautotrophicus (strain ATCC 29096 / DSM 1053 / JCM 10044 / NBRC 100330 / Delta H) (Methanobacterium thermoautotrophicum)).